We begin with the raw amino-acid sequence, 188 residues long: Elongation factor P (188 aa).

This sequence belongs to the elongation factor P family.

It is found in the cytoplasm. The protein operates within protein biosynthesis; polypeptide chain elongation. In terms of biological role, involved in peptide bond synthesis. Stimulates efficient translation and peptide-bond synthesis on native or reconstituted 70S ribosomes in vitro. Probably functions indirectly by altering the affinity of the ribosome for aminoacyl-tRNA, thus increasing their reactivity as acceptors for peptidyl transferase. The protein is Elongation factor P of Bacteroides thetaiotaomicron (strain ATCC 29148 / DSM 2079 / JCM 5827 / CCUG 10774 / NCTC 10582 / VPI-5482 / E50).